A 639-amino-acid chain; its full sequence is Chaperone protein DnaK (639 aa).

Residue Thr195 is modified to Phosphothreonine; by autocatalysis. Residues 601–618 (NAAAGAAPAGEPAPGEPQ) are compositionally biased toward low complexity. Residues 601 to 639 (NAAAGAAPAGEPAPGEPQAEQKKDDGVIDAEYVDVDEKK) are disordered. Residues 627-639 (VIDAEYVDVDEKK) show a composition bias toward acidic residues.

It belongs to the heat shock protein 70 family.

Acts as a chaperone. This chain is Chaperone protein DnaK, found in Acidobacterium capsulatum (strain ATCC 51196 / DSM 11244 / BCRC 80197 / JCM 7670 / NBRC 15755 / NCIMB 13165 / 161).